A 469-amino-acid polypeptide reads, in one-letter code: 3-isopropylmalate dehydratase large subunit (469 aa).

Residues cysteine 347, cysteine 408, and cysteine 411 each contribute to the [4Fe-4S] cluster site.

Belongs to the aconitase/IPM isomerase family. LeuC type 1 subfamily. As to quaternary structure, heterodimer of LeuC and LeuD. [4Fe-4S] cluster is required as a cofactor.

It carries out the reaction (2R,3S)-3-isopropylmalate = (2S)-2-isopropylmalate. Its pathway is amino-acid biosynthesis; L-leucine biosynthesis; L-leucine from 3-methyl-2-oxobutanoate: step 2/4. Its function is as follows. Catalyzes the isomerization between 2-isopropylmalate and 3-isopropylmalate, via the formation of 2-isopropylmaleate. The chain is 3-isopropylmalate dehydratase large subunit from Actinobacillus succinogenes (strain ATCC 55618 / DSM 22257 / CCUG 43843 / 130Z).